The sequence spans 271 residues: NH(3)-dependent NAD(+) synthetase (271 aa).

ATP is bound at residue 43-50; sequence GISGGQDS. D49 is a binding site for Mg(2+). Position 136 (R136) interacts with deamido-NAD(+). T156 contributes to the ATP binding site. Position 161 (E161) interacts with Mg(2+). 2 residues coordinate deamido-NAD(+): K169 and D176. ATP contacts are provided by K185 and T207. A deamido-NAD(+)-binding site is contributed by 256–257; the sequence is HK.

It belongs to the NAD synthetase family. In terms of assembly, homodimer.

The catalysed reaction is deamido-NAD(+) + NH4(+) + ATP = AMP + diphosphate + NAD(+) + H(+). It functions in the pathway cofactor biosynthesis; NAD(+) biosynthesis; NAD(+) from deamido-NAD(+) (ammonia route): step 1/1. Its function is as follows. Catalyzes the ATP-dependent amidation of deamido-NAD to form NAD. Uses ammonia as a nitrogen source. The sequence is that of NH(3)-dependent NAD(+) synthetase from Tropheryma whipplei (strain TW08/27) (Whipple's bacillus).